A 114-amino-acid chain; its full sequence is MTQPAIGWRVGLGPSIIRGPLVGKSPWSVFMIYGRTSKKPGPSRTSFLVYKRKYSSRKAALGGTLSHKVCKPFGMGFCFFLYFSICRFFASKERENKVGCNDVRICTNFYLFSD.

The protein localises to the mitochondrion. This is an uncharacterized protein from Arabidopsis thaliana (Mouse-ear cress).